The sequence spans 474 residues: GTPase Der (474 aa).

EngA-type G domains are found at residues 3 to 167 (LTIA…GSER) and 204 to 379 (IRIA…RVWN). GTP contacts are provided by residues 9–16 (GRPNVGKS), 56–60 (DTAGL), 119–122 (NKSE), 210–217 (GRPNTGKS), 257–261 (DTAGL), and 322–325 (NKWD). The 85-residue stretch at 380–464 (RRISTAKLNQ…PVRLSLRASD (85 aa)) folds into the KH-like domain.

Belongs to the TRAFAC class TrmE-Era-EngA-EngB-Septin-like GTPase superfamily. EngA (Der) GTPase family. As to quaternary structure, associates with the 50S ribosomal subunit.

In terms of biological role, GTPase that plays an essential role in the late steps of ribosome biogenesis. This Bartonella tribocorum (strain CIP 105476 / IBS 506) protein is GTPase Der.